The chain runs to 59 residues: UPF0181 protein YoaH (59 aa).

This sequence belongs to the UPF0181 family.

This Shigella sonnei (strain Ss046) protein is UPF0181 protein YoaH.